A 130-amino-acid chain; its full sequence is Small ribosomal subunit protein uS8 (130 aa).

Belongs to the universal ribosomal protein uS8 family. Part of the 30S ribosomal subunit.

In terms of biological role, one of the primary rRNA binding proteins, it binds directly to 16S rRNA central domain where it helps coordinate assembly of the platform of the 30S subunit. This is Small ribosomal subunit protein uS8 from Methanococcus maripaludis (strain C7 / ATCC BAA-1331).